The chain runs to 326 residues: Glycerol-3-phosphate dehydrogenase [NAD(P)+] (326 aa).

NADPH-binding residues include tryptophan 16, arginine 36, arginine 37, and lysine 106. 2 residues coordinate sn-glycerol 3-phosphate: lysine 106 and glycine 132. Alanine 136 contributes to the NADPH binding site. Sn-glycerol 3-phosphate is bound by residues lysine 187, aspartate 240, serine 250, arginine 251, and asparagine 252. The active-site Proton acceptor is lysine 187. NADPH is bound at residue arginine 251. The NADPH site is built by valine 271 and glutamate 273.

This sequence belongs to the NAD-dependent glycerol-3-phosphate dehydrogenase family.

The protein localises to the cytoplasm. It carries out the reaction sn-glycerol 3-phosphate + NAD(+) = dihydroxyacetone phosphate + NADH + H(+). The catalysed reaction is sn-glycerol 3-phosphate + NADP(+) = dihydroxyacetone phosphate + NADPH + H(+). Its pathway is membrane lipid metabolism; glycerophospholipid metabolism. Its function is as follows. Catalyzes the reduction of the glycolytic intermediate dihydroxyacetone phosphate (DHAP) to sn-glycerol 3-phosphate (G3P), the key precursor for phospholipid synthesis. The polypeptide is Glycerol-3-phosphate dehydrogenase [NAD(P)+] (Deinococcus geothermalis (strain DSM 11300 / CIP 105573 / AG-3a)).